Here is a 176-residue protein sequence, read N- to C-terminus: Protein MAL2 (176 aa).

Topologically, residues 1-34 (MSAGGASVPPPPNPAVSFPVPRVTLPAGPDILRT) are cytoplasmic. The MARVEL domain maps to 31–175 (ILRTYSGAFV…SLGLALRRWR (145 aa)). The helical transmembrane segment at 35 to 55 (YSGAFVCLEILFGGLVWILVA) threads the bilayer. Residues 56–66 (SSNVPLPLLQG) lie on the Lumenal side of the membrane. Residues 67-87 (WVMFVSVTAFFFSLLFLGLFL) form a helical membrane-spanning segment. At 88–102 (SGMVTQIDANWNFLD) the chain is on the cytoplasmic side. A helical transmembrane segment spans residues 103–123 (FAYHFTVFVFYFGAFLLEAAA). Over 124–149 (TSLHDLHYNITMTGQPLLNDNQYNIN) the chain is Lumenal. N-linked (GlcNAc...) asparagine glycosylation occurs at Asn132. Residues 150-170 (VAASIFAFMTTACYGCSLGLA) traverse the membrane as a helical segment. Residues 171 to 176 (LRRWRP) lie on the Cytoplasmic side of the membrane.

This sequence belongs to the MAL family. Interacts with TPD52L2.

The protein resides in the cell membrane. Its subcellular location is the apical cell membrane. Functionally, member of the machinery of polarized transport. Required for the indirect transcytotic route at the step of the egress of the transcytosing cargo from perinuclear endosomes in order for it to travel to the apical surface via a raft-dependent pathway. In Pongo abelii (Sumatran orangutan), this protein is Protein MAL2 (MAL2).